We begin with the raw amino-acid sequence, 309 residues long: Low density lipoprotein receptor adapter protein 1-A (309 aa).

The PID domain occupies 41–195 (LLEGMLFHLK…SGGEGASSSQ (155 aa)). The segment at 179-199 (EKREKSGSGGEGASSSQSDGS) is disordered. Residues 213-217 (LLDLE) carry the Clathrin box motif. Positions 250–277 (WELDDGLDEAFARLAESRTNPQVLDIGL) are AP-2 complex binding. Residues 258–267 (EAFARLAESR) carry the [DE]-X(1,2)-F-X-X-[FL]-X-X-X-R motif motif.

As to quaternary structure, interacts (via PID domain) with ldlr (via NPXY motif). Binds to soluble clathrin trimers and to the adapter protein complex 2 (AP-2, beta 2 subunit). Binds to phosphoinositides, which regulate clathrin bud assembly at the cell surface. Interacts with the VLDL receptor (vldlr). Interacts with the vitellogenin receptor. In terms of tissue distribution, expressed at high level during oogenesis and embryogenesis. Found in the oocyte vegetal cortex. Found at low level in the adult liver and spleen. Found at very low level in testis and heart.

It is found in the cytoplasm. Its function is as follows. Adapter protein (clathrin-associated sorting protein (CLASP)) required for efficient endocytosis of the LDL receptor (LDLR). Also involved in the vitellogenin receptor mediated endocytosis of nutrients during oogenesis. The polypeptide is Low density lipoprotein receptor adapter protein 1-A (Xenopus laevis (African clawed frog)).